Consider the following 473-residue polypeptide: Bifunctional protein HldE (473 aa).

Residues 1–317 (MKLSMPRFDQ…RRAIQREEGS (317 aa)) form a ribokinase region. An ATP-binding site is contributed by 194–197 (NLSE). The active site involves Asp-263. The tract at residues 343-473 (FTNGCFDILH…TAIVEKIRKN (131 aa)) is cytidylyltransferase.

In the N-terminal section; belongs to the carbohydrate kinase PfkB family. This sequence in the C-terminal section; belongs to the cytidylyltransferase family. In terms of assembly, homodimer.

The catalysed reaction is D-glycero-beta-D-manno-heptose 7-phosphate + ATP = D-glycero-beta-D-manno-heptose 1,7-bisphosphate + ADP + H(+). The enzyme catalyses D-glycero-beta-D-manno-heptose 1-phosphate + ATP + H(+) = ADP-D-glycero-beta-D-manno-heptose + diphosphate. It participates in nucleotide-sugar biosynthesis; ADP-L-glycero-beta-D-manno-heptose biosynthesis; ADP-L-glycero-beta-D-manno-heptose from D-glycero-beta-D-manno-heptose 7-phosphate: step 1/4. Its pathway is nucleotide-sugar biosynthesis; ADP-L-glycero-beta-D-manno-heptose biosynthesis; ADP-L-glycero-beta-D-manno-heptose from D-glycero-beta-D-manno-heptose 7-phosphate: step 3/4. Functionally, catalyzes the phosphorylation of D-glycero-D-manno-heptose 7-phosphate at the C-1 position to selectively form D-glycero-beta-D-manno-heptose-1,7-bisphosphate. Its function is as follows. Catalyzes the ADP transfer from ATP to D-glycero-beta-D-manno-heptose 1-phosphate, yielding ADP-D-glycero-beta-D-manno-heptose. This is Bifunctional protein HldE from Pseudomonas putida (strain W619).